A 312-amino-acid polypeptide reads, in one-letter code: Ornithine carbamoyltransferase (312 aa).

Carbamoyl phosphate is bound by residues 57 to 60, Q84, R108, and 135 to 138; these read STRT and HPCQ. Residues N166, D226, and 230–231 contribute to the L-ornithine site; that span reads SM. Residues 265 to 266 and R293 contribute to the carbamoyl phosphate site; that span reads CL.

It belongs to the aspartate/ornithine carbamoyltransferase superfamily. OTCase family.

It is found in the cytoplasm. It carries out the reaction carbamoyl phosphate + L-ornithine = L-citrulline + phosphate + H(+). The protein operates within amino-acid biosynthesis; L-arginine biosynthesis; L-arginine from L-ornithine and carbamoyl phosphate: step 1/3. Its function is as follows. Reversibly catalyzes the transfer of the carbamoyl group from carbamoyl phosphate (CP) to the N(epsilon) atom of ornithine (ORN) to produce L-citrulline. This chain is Ornithine carbamoyltransferase, found in Brucella suis biovar 1 (strain 1330).